Here is a 464-residue protein sequence, read N- to C-terminus: Forkhead box protein N3 (464 aa).

Disordered regions lie at residues methionine 1–glycine 53 and proline 85–glutamine 108. Residues threonine 14–asparagine 30 are compositionally biased toward polar residues. The segment at residues lysine 113–proline 209 is a DNA-binding region (fork-head). 2 disordered regions span residues methionine 294–alanine 337 and leucine 381–alanine 428. Residues serine 316–serine 336 show a composition bias toward low complexity. Basic residues predominate over residues glutamine 389–arginine 401.

It localises to the nucleus. Acts as a transcriptional repressor. May be involved in DNA damage-inducible cell cycle arrests (checkpoints). The protein is Forkhead box protein N3 of Xenopus tropicalis (Western clawed frog).